The primary structure comprises 319 residues: MTTVPVTDIQNDLITEFSEDNYPSNKNYEITLRQMSILTHVNNVVDREHNAAVVSSPEEISSQLNEDLFPDDDSPATIIERVQQPHTTIIDDTPPPTFRRELLISEQRQQREKRFNITVSKNAEAIMESRSMITSMPTQTPSLGVVYDKDKRIQMLEDEVVNLRNQQSNTKSSNNLDNFTRILFGKTPYKSTEVNKRIAIVNYANLNGSPLSVEDLDVCSEDEIDRIYKTIKQYHESRKRKIIVTNVIIIVINIIEQALLKLGFDEIKGLSTDITSEIIDVEIGDDCDAVASKLGIGNSPVLNIVLFILKIFVKRIKII.

Residues 146 to 173 (VYDKDKRIQMLEDEVVNLRNQQSNTKSS) are a coiled coil.

This sequence belongs to the orthopoxvirus OPG137 family. As to quaternary structure, homomultimer. Interacts with OPG160. Phosphorylated by a OPG054-independent mechanism.

Its subcellular location is the host cytoplasm. In terms of biological role, required for viral crescent formation early during virus morphogenesis. In Variola virus (isolate Human/India/Ind3/1967) (VARV), this protein is Protein OPG137 (OPG137).